Consider the following 133-residue polypeptide: MSRPNSVRWLNEVQWDDQGLVPVIAQEAASGDVLMFAWMNREALQRTAETGEAIYWSRSRRRLWHKGEESGHIQKVLEIRLDCDSDVVLLKIEQIGGIACHTGRHSCFFQRYLADGSWETVDPVVKDPKDIYK.

D82 contributes to the Mg(2+) binding site. C83 is a Zn(2+) binding site. The Mg(2+) site is built by D84 and D86. Residues C100 and C107 each coordinate Zn(2+).

The protein belongs to the PRA-CH family. In terms of assembly, homodimer. Mg(2+) is required as a cofactor. Requires Zn(2+) as cofactor.

The protein resides in the cytoplasm. It carries out the reaction 1-(5-phospho-beta-D-ribosyl)-5'-AMP + H2O = 1-(5-phospho-beta-D-ribosyl)-5-[(5-phospho-beta-D-ribosylamino)methylideneamino]imidazole-4-carboxamide. The protein operates within amino-acid biosynthesis; L-histidine biosynthesis; L-histidine from 5-phospho-alpha-D-ribose 1-diphosphate: step 3/9. Functionally, catalyzes the hydrolysis of the adenine ring of phosphoribosyl-AMP. The polypeptide is Phosphoribosyl-AMP cyclohydrolase (Aromatoleum aromaticum (strain DSM 19018 / LMG 30748 / EbN1) (Azoarcus sp. (strain EbN1))).